A 267-amino-acid polypeptide reads, in one-letter code: Protein BMH1 (267 aa).

Ser2 is subject to N-acetylserine. A Glycyl lysine isopeptide (Lys-Gly) (interchain with G-Cter in ubiquitin) cross-link involves residue Lys76. Ser89 is subject to Phosphoserine. The tract at residues 236 to 267 is disordered; the sequence is DMSESGQAEDQQQQQQHQQQQPPAAAEGEAPK. Low complexity predominate over residues 243 to 267; the sequence is AEDQQQQQQHQQQQPPAAAEGEAPK.

Belongs to the 14-3-3 family. Homodimer. Interacts with NTH1 (via N-terminus when phosphorylated by PKA); the interaction is direct and activates NTH1. Interacts with FIN1.

Involved in growth regulation. The sequence is that of Protein BMH1 (BMH1) from Saccharomyces cerevisiae (strain ATCC 204508 / S288c) (Baker's yeast).